A 1244-amino-acid chain; its full sequence is ATP-dependent helicase/nuclease subunit A (1244 aa).

Residues threonine 4–arginine 477 enclose the UvrD-like helicase ATP-binding domain. An ATP-binding site is contributed by alanine 25–threonine 32. A UvrD-like helicase C-terminal domain is found at lysine 517 to glycine 811.

This sequence belongs to the helicase family. AddA subfamily. As to quaternary structure, heterodimer of AddA and AddB/RexB. Mg(2+) is required as a cofactor.

The catalysed reaction is Couples ATP hydrolysis with the unwinding of duplex DNA by translocating in the 3'-5' direction.. It carries out the reaction ATP + H2O = ADP + phosphate + H(+). Functionally, the heterodimer acts as both an ATP-dependent DNA helicase and an ATP-dependent, dual-direction single-stranded exonuclease. Recognizes the chi site generating a DNA molecule suitable for the initiation of homologous recombination. The AddA nuclease domain is required for chi fragment generation; this subunit has the helicase and 3' -&gt; 5' nuclease activities. This is ATP-dependent helicase/nuclease subunit A from Clostridium botulinum (strain Alaska E43 / Type E3).